The sequence spans 204 residues: Large ribosomal subunit protein eL15 (204 aa).

Positions 172 to 182 (RGLRGRGHLHN) are enriched in basic residues. Positions 172–204 (RGLRGRGHLHNKAPPSRRANWKRNQTLSLPRYR) are disordered. The span at 193-204 (KRNQTLSLPRYR) shows a compositional bias: polar residues.

The protein belongs to the eukaryotic ribosomal protein eL15 family.

The polypeptide is Large ribosomal subunit protein eL15 (RPL15) (Petunia hybrida (Petunia)).